We begin with the raw amino-acid sequence, 335 residues long: Phospho-N-acetylmuramoyl-pentapeptide-transferase (335 aa).

10 helical membrane passes run 5–25, 50–70, 78–98, 114–133, 145–165, 177–197, 200–220, 236–256, 262–282, and 311–331; these read IFLAAALALMITLILGPLMIP, TPTMGGIIFLVGIVVSALIMA, MVMVISAMLGYGLIGFIDDFI, LIGQIALALLLTWGANRYLG, IHLELGLFYYPFVSFIIVGIT, LAAGTTLFSMLSYVSIATLAA, GGGVAILAYESDLAVFAAAAV, VFMGDTGSLALGGALVGLAVL, ILLIIGGVYVVEAISVILQVF, and VVMVFWLASLLCGVLGVIAYM.

The protein belongs to the glycosyltransferase 4 family. MraY subfamily. Mg(2+) is required as a cofactor.

It localises to the cell membrane. It catalyses the reaction UDP-N-acetyl-alpha-D-muramoyl-L-alanyl-gamma-D-glutamyl-meso-2,6-diaminopimeloyl-D-alanyl-D-alanine + di-trans,octa-cis-undecaprenyl phosphate = di-trans,octa-cis-undecaprenyl diphospho-N-acetyl-alpha-D-muramoyl-L-alanyl-D-glutamyl-meso-2,6-diaminopimeloyl-D-alanyl-D-alanine + UMP. It functions in the pathway cell wall biogenesis; peptidoglycan biosynthesis. In terms of biological role, catalyzes the initial step of the lipid cycle reactions in the biosynthesis of the cell wall peptidoglycan: transfers peptidoglycan precursor phospho-MurNAc-pentapeptide from UDP-MurNAc-pentapeptide onto the lipid carrier undecaprenyl phosphate, yielding undecaprenyl-pyrophosphoryl-MurNAc-pentapeptide, known as lipid I. The sequence is that of Phospho-N-acetylmuramoyl-pentapeptide-transferase from Desulfitobacterium hafniense (strain DSM 10664 / DCB-2).